Reading from the N-terminus, the 197-residue chain is Recombination protein RecR (197 aa).

The C4-type zinc-finger motif lies at 57–72 (CSVCFAITEDDPCWIC). Residues 79-174 (GTICVVEEPQ…KVTRLAHGIP (96 aa)) form the Toprim domain.

This sequence belongs to the RecR family.

In terms of biological role, may play a role in DNA repair. It seems to be involved in an RecBC-independent recombinational process of DNA repair. It may act with RecF and RecO. This Geobacter sp. (strain M21) protein is Recombination protein RecR.